Consider the following 122-residue polypeptide: MIRPQSYLNVADNTGARKVMCIRVLGGIQGQTANIGDVIIAVVKDALPNTGVKKSDIVRAVVVRTRKGIRRENGMFIRFEDNAAVVINKEGNPRGTRIFGPVARELRDRNFTKIVSLAPEVL.

Belongs to the universal ribosomal protein uL14 family. Part of the 50S ribosomal subunit.

The protein resides in the plastid. Its subcellular location is the chloroplast. Its function is as follows. Binds to 23S rRNA. The sequence is that of Large ribosomal subunit protein uL14c from Stigeoclonium helveticum (Green alga).